The primary structure comprises 217 residues: GTP cyclohydrolase 1 (217 aa).

Zn(2+) contacts are provided by Cys109, His112, and Cys180.

Belongs to the GTP cyclohydrolase I family. As to quaternary structure, toroid-shaped homodecamer, composed of two pentamers of five dimers.

The enzyme catalyses GTP + H2O = 7,8-dihydroneopterin 3'-triphosphate + formate + H(+). It participates in cofactor biosynthesis; 7,8-dihydroneopterin triphosphate biosynthesis; 7,8-dihydroneopterin triphosphate from GTP: step 1/1. This is GTP cyclohydrolase 1 from Vibrio cholerae serotype O1 (strain ATCC 39315 / El Tor Inaba N16961).